A 205-amino-acid chain; its full sequence is Holliday junction branch migration complex subunit RuvA (205 aa).

Positions 1 to 64 (MIGRLRGVLV…EDAQLLYGFI (64 aa)) are domain I. The interval 65–143 (TKQERALFRL…SLMEASAGSE (79 aa)) is domain II. Residues 144 to 156 (REFVLQSNYSPTP) form a flexible linker region. Residues 157 to 205 (TVNSAEEDAISALISLGYKPPQASKSVSAAYKEGMDSETLIKAALKSML) are domain III.

This sequence belongs to the RuvA family. Homotetramer. Forms an RuvA(8)-RuvB(12)-Holliday junction (HJ) complex. HJ DNA is sandwiched between 2 RuvA tetramers; dsDNA enters through RuvA and exits via RuvB. An RuvB hexamer assembles on each DNA strand where it exits the tetramer. Each RuvB hexamer is contacted by two RuvA subunits (via domain III) on 2 adjacent RuvB subunits; this complex drives branch migration. In the full resolvosome a probable DNA-RuvA(4)-RuvB(12)-RuvC(2) complex forms which resolves the HJ.

It localises to the cytoplasm. Its function is as follows. The RuvA-RuvB-RuvC complex processes Holliday junction (HJ) DNA during genetic recombination and DNA repair, while the RuvA-RuvB complex plays an important role in the rescue of blocked DNA replication forks via replication fork reversal (RFR). RuvA specifically binds to HJ cruciform DNA, conferring on it an open structure. The RuvB hexamer acts as an ATP-dependent pump, pulling dsDNA into and through the RuvAB complex. HJ branch migration allows RuvC to scan DNA until it finds its consensus sequence, where it cleaves and resolves the cruciform DNA. In Shewanella sp. (strain W3-18-1), this protein is Holliday junction branch migration complex subunit RuvA.